The chain runs to 1224 residues: DNA-directed RNA polymerase subunit beta'' (1224 aa).

Residues Cys-223, Cys-297, Cys-304, and Cys-307 each contribute to the Zn(2+) site.

It belongs to the RNA polymerase beta' chain family. RpoC2 subfamily. In plastids the minimal PEP RNA polymerase catalytic core is composed of four subunits: alpha, beta, beta', and beta''. When a (nuclear-encoded) sigma factor is associated with the core the holoenzyme is formed, which can initiate transcription. It depends on Zn(2+) as a cofactor.

It localises to the plastid. Its subcellular location is the chloroplast. The catalysed reaction is RNA(n) + a ribonucleoside 5'-triphosphate = RNA(n+1) + diphosphate. Its function is as follows. DNA-dependent RNA polymerase catalyzes the transcription of DNA into RNA using the four ribonucleoside triphosphates as substrates. In Porphyra purpurea (Red seaweed), this protein is DNA-directed RNA polymerase subunit beta''.